A 498-amino-acid chain; its full sequence is Argininosuccinate lyase 1 (498 aa).

This sequence belongs to the lyase 1 family. Argininosuccinate lyase subfamily.

The protein localises to the cytoplasm. The enzyme catalyses 2-(N(omega)-L-arginino)succinate = fumarate + L-arginine. It functions in the pathway amino-acid biosynthesis; L-arginine biosynthesis; L-arginine from L-ornithine and carbamoyl phosphate: step 3/3. This is Argininosuccinate lyase 1 from Shouchella clausii (strain KSM-K16) (Alkalihalobacillus clausii).